A 448-amino-acid chain; its full sequence is 5-hydroxytryptamine receptor 7 (448 aa).

The Extracellular segment spans residues 1–86 (MMDVNSSGRP…INYGRVEKVV (86 aa)). N-linked (GlcNAc...) asparagine glycans are attached at residues N5 and N69. A helical membrane pass occupies residues 87–111 (IGSILTLITLLTIAGNCLVVISVCF). Over 112-121 (VKKLRQPSNY) the chain is Cytoplasmic. Residues 122–143 (LIVSLALADLSVAVAVMPFVSV) traverse the membrane as a helical segment. The Extracellular segment spans residues 144-155 (TDLIGGKWIFGH). The helical transmembrane segment at 156–181 (FFCNVFIAMDVMCCTASIMTLCVISI) threads the bilayer. A disulfide bridge connects residues C158 and C234. Position 165 (D165) interacts with serotonin. At 182-201 (DRYLGITRPLTYPVRQNGKC) the chain is on the cytoplasmic side. The chain crosses the membrane as a helical span at residues 202-222 (MAKMILSVWLLSASITLPPLF). The Extracellular segment spans residues 223 to 240 (GWAQNVNDDKVCLISQDF). Residues 241 to 263 (GYTIYSTAVAFYIPMSVMLFMYY) traverse the membrane as a helical segment. Residues 264-329 (QIYKAARKSA…SIFKREQKAA (66 aa)) are Cytoplasmic-facing. The chain crosses the membrane as a helical span at residues 330–355 (TTLGIIVGAFTVCWLPFFLLSTARPF). Residues 356-366 (ICGTSCSCIPL) are Extracellular-facing. A helical membrane pass occupies residues 367 to 390 (WVERTCLWLGYANSLINPFIYAFF). Topologically, residues 391-448 (NRDLRTTYRSLLQCQYRNINRKLSAAGMHEALKLAERPERSEFVLQNSDHCGKKGHDT) are cytoplasmic. C404 carries the S-palmitoyl cysteine lipid modification.

It belongs to the G-protein coupled receptor 1 family. As to expression, thalamus, hypothalamus, and the hippocampal rudiments.

It localises to the cell membrane. G-protein coupled receptor for 5-hydroxytryptamine (serotonin), a biogenic hormone that functions as a neurotransmitter, a hormone and a mitogen. Ligand binding causes a conformation change that triggers signaling via guanine nucleotide-binding proteins (G proteins) and modulates the activity of downstream effectors. HTR7 is coupled to G(s) G alpha proteins and mediates activation of adenylate cyclase activity. The polypeptide is 5-hydroxytryptamine receptor 7 (Rattus norvegicus (Rat)).